We begin with the raw amino-acid sequence, 119 residues long: NADH-quinone oxidoreductase subunit A (119 aa).

Helical transmembrane passes span 9-29, 63-83, and 88-108; these read IFLF…LGYI, LVAI…PWAV, and IGAL…VGFI.

This sequence belongs to the complex I subunit 3 family. As to quaternary structure, NDH-1 is composed of 14 different subunits. Subunits NuoA, H, J, K, L, M, N constitute the membrane sector of the complex.

The protein localises to the cell inner membrane. It catalyses the reaction a quinone + NADH + 5 H(+)(in) = a quinol + NAD(+) + 4 H(+)(out). Functionally, NDH-1 shuttles electrons from NADH, via FMN and iron-sulfur (Fe-S) centers, to quinones in the respiratory chain. The immediate electron acceptor for the enzyme in this species is believed to be ubiquinone. Couples the redox reaction to proton translocation (for every two electrons transferred, four hydrogen ions are translocated across the cytoplasmic membrane), and thus conserves the redox energy in a proton gradient. The chain is NADH-quinone oxidoreductase subunit A from Albidiferax ferrireducens (strain ATCC BAA-621 / DSM 15236 / T118) (Rhodoferax ferrireducens).